A 488-amino-acid chain; its full sequence is Ribulose bisphosphate carboxylase large chain 1 (488 aa).

Residues Asn127 and Thr177 each contribute to the substrate site. Lys179 acts as the Proton acceptor in catalysis. Substrate is bound at residue Lys181. Mg(2+)-binding residues include Lys205, Asp207, and Glu208. Lys205 bears the N6-carboxylysine mark. Catalysis depends on His297, which acts as the Proton acceptor. Substrate-binding residues include Arg298, His330, and Ser382.

Belongs to the RuBisCO large chain family. Type I subfamily. Heterohexadecamer of 8 large chains and 8 small chains. Requires Mg(2+) as cofactor.

It catalyses the reaction 2 (2R)-3-phosphoglycerate + 2 H(+) = D-ribulose 1,5-bisphosphate + CO2 + H2O. The catalysed reaction is D-ribulose 1,5-bisphosphate + O2 = 2-phosphoglycolate + (2R)-3-phosphoglycerate + 2 H(+). Functionally, ruBisCO catalyzes two reactions: the carboxylation of D-ribulose 1,5-bisphosphate, the primary event in carbon dioxide fixation, as well as the oxidative fragmentation of the pentose substrate. Both reactions occur simultaneously and in competition at the same active site. The polypeptide is Ribulose bisphosphate carboxylase large chain 1 (Bradyrhizobium sp. (strain BTAi1 / ATCC BAA-1182)).